A 199-amino-acid polypeptide reads, in one-letter code: Interleukin-11 (199 aa).

Residues Met1–Ala21 form the signal peptide. The important for interaction with IL11RA and for the stimulation of cell proliferation stretch occupies residues His182 to Arg190.

It belongs to the IL-6 superfamily. As to quaternary structure, interacts with either IL11RA1 or IL11RA2 to associate with IL6ST, giving rise to a multimeric signaling complex.

It localises to the secreted. In terms of biological role, cytokine that stimulates the proliferation of hematopoietic stem cells and megakaryocyte progenitor cells and induces megakaryocyte maturation resulting in increased platelet production. Also promotes the proliferation of hepatocytes in response to liver damage. Binding to its receptor formed by IL6ST and either IL11RA1 or IL11RA2 activates a signaling cascade that promotes cell proliferation, also in the context of various cancers. Signaling leads to the activation of intracellular protein kinases and the phosphorylation of STAT3. The interaction with the membrane-bound IL11RA and IL6ST stimulates 'classic signaling', whereas the binding of IL11 and soluble IL11RA to IL6ST stimulates 'trans-signaling'. The chain is Interleukin-11 from Mus musculus (Mouse).